Reading from the N-terminus, the 383-residue chain is Lipid-A-disaccharide synthase (383 aa).

It belongs to the LpxB family.

The enzyme catalyses a lipid X + a UDP-2-N,3-O-bis[(3R)-3-hydroxyacyl]-alpha-D-glucosamine = a lipid A disaccharide + UDP + H(+). It functions in the pathway bacterial outer membrane biogenesis; LPS lipid A biosynthesis. In terms of biological role, condensation of UDP-2,3-diacylglucosamine and 2,3-diacylglucosamine-1-phosphate to form lipid A disaccharide, a precursor of lipid A, a phosphorylated glycolipid that anchors the lipopolysaccharide to the outer membrane of the cell. In Aliivibrio salmonicida (strain LFI1238) (Vibrio salmonicida (strain LFI1238)), this protein is Lipid-A-disaccharide synthase.